The chain runs to 143 residues: Mannitol-specific phosphotransferase enzyme IIA component (143 aa).

In terms of domain architecture, PTS EIIA type-2 spans 2–142; the sequence is QVLAKENIKL…EDLIAIFNEV (141 aa). His62 acts as the Tele-phosphohistidine intermediate in catalysis. His62 is subject to Phosphohistidine; by HPr. Phosphoserine is present on Ser74.

It is found in the cytoplasm. Functionally, the phosphoenolpyruvate-dependent sugar phosphotransferase system (sugar PTS), a major carbohydrate active transport system, catalyzes the phosphorylation of incoming sugar substrates concomitantly with their translocation across the cell membrane. The enzyme II CmtAB PTS system is involved in D-mannitol transport. This Bacillus subtilis (strain 168) protein is Mannitol-specific phosphotransferase enzyme IIA component (mtlF).